The following is a 90-amino-acid chain: Small ribosomal subunit protein uS15c (90 aa).

This sequence belongs to the universal ribosomal protein uS15 family. As to quaternary structure, part of the 30S ribosomal subunit.

The protein localises to the plastid. It is found in the chloroplast. The polypeptide is Small ribosomal subunit protein uS15c (rps15) (Phaseolus vulgaris (Kidney bean)).